The primary structure comprises 417 residues: Serine/threonine-protein phosphatase 4 regulatory subunit 2 (417 aa).

Positions 141–417 (KNNSNSLNRM…EVTDDPMEQD (277 aa)) are disordered. Polar residues-rich tracts occupy residues 158 to 170 (NSPN…NING) and 186 to 196 (APLTTNGLPES). A Phosphoserine modification is found at serine 159. Over residues 197–213 (TDSKDSELQLSEEKGHS) the composition is skewed to basic and acidic residues. Positions 214-226 (DSSASESEVSLLS) are enriched in low complexity. Serine 226 is subject to Phosphoserine. A compositionally biased stretch (basic and acidic residues) spans 243–258 (HEVKRLKFDKEGDVRE). Residues 259 to 268 (TASQTVSGEV) show a composition bias toward polar residues. Over residues 283-296 (PDKDRESRTRQHCT) the composition is skewed to basic and acidic residues. Residues 297–313 (EEEEEEEEEEEEEEEES) are compositionally biased toward acidic residues. The segment covering 320-329 (MVPERKNQEK) has biased composition (basic and acidic residues). The span at 367-376 (SAGASRSGSD) shows a compositional bias: low complexity. Polar residues predominate over residues 378–392 (LETQESGGPPSSKTG). Over residues 402 to 417 (ESEEATEVTDDPMEQD) the composition is skewed to acidic residues.

This sequence belongs to the PPP4R2 family. As to quaternary structure, serine/threonine-protein phosphatase 4 (PP4) occurs in different assemblies of the catalytic and one or more regulatory subunits. Component of the PP4 complexes PPP4C-PPP4R2, PPP4C-PPP4R2-PPP4R3A and PPP4C-PPP4R2-PPP4R3B. The PPP4C-PPP4R2 complex appears to be a tetramer composed of 2 molecules of PPP4C and 2 molecules of PPP4R2. Interacts with DDX20/GEMIN3 and GEMIN4. Interacts with RPA2; this DNA damage-dependent interaction recruits PPP4C leading to RPA2 dephosphorylation.

The protein localises to the cytoplasm. Its subcellular location is the cytoskeleton. It localises to the microtubule organizing center. The protein resides in the centrosome. It is found in the nucleus. Regulatory subunit of serine/threonine-protein phosphatase 4 (PP4). May regulate the activity of PPP4C at centrosomal microtubule organizing centers. Its interaction with the SMN complex leads to enhance the temporal localization of snRNPs, suggesting a role of PPP4C in maturation of spliceosomal snRNPs. The PPP4C-PPP4R2-PPP4R3A PP4 complex specifically dephosphorylates H2AX phosphorylated on 'Ser-140' (gamma-H2AX) generated during DNA replication and required for DNA double strand break repair. Mediates RPA2 dephosphorylation by recruiting PPP4C to RPA2 in a DNA damage-dependent manner. RPA2 dephosphorylation is required for the efficient RPA2-mediated recruitment of RAD51 to chromatin following double strand breaks, an essential step for DNA repair. This chain is Serine/threonine-protein phosphatase 4 regulatory subunit 2 (Ppp4r2), found in Mus musculus (Mouse).